Reading from the N-terminus, the 1163-residue chain is Hamartin (1163 aa).

K30 participates in a covalent cross-link: Glycyl lysine isopeptide (Lys-Gly) (interchain with G-Cter in ubiquitin). Residues 295-316 show a composition bias toward polar residues; it reads SSYVDTQNSYGGATSTPSSTSR. Disordered regions lie at residues 295-337 and 353-594; these read SSYV…STRP and CGMT…QRGV. The span at 321-337 shows a compositional bias: low complexity; sequence STPGQLPQSLSSLSTRP. Over residues 393 to 402 the composition is skewed to pro residues; the sequence is TSPPPAPPCP. Positions 403-787 are mediates interaction with WDR45B; it reads QDDCAHGPAS…QIRQLQHDRE (385 aa). A compositionally biased stretch (basic and acidic residues) spans 474 to 487; the sequence is EKDKEEAAISKELS. S487, S505, S511, S521, S595, and S598 each carry phosphoserine. Residues 512 to 530 show a composition bias toward polar residues; that stretch reads LSGSQRKTHSAASGTQGFS. Coiled coils occupy residues 721–919 and 970–994; these read RKVI…LAKK and EKDG…ERLD. Positions 1008–1020 are enriched in basic and acidic residues; it reads NEEAAGHNGETRT. The interval 1008–1163 is disordered; that stretch reads NEEAAGHNGE…DYNETHHEHS (156 aa). The span at 1029–1046 shows a compositional bias: low complexity; it reads SCGGRVTGGSSSSSSELS. Positions 1066-1083 are enriched in polar residues; sequence EPSSSIPTTVGSLPSSKS. The span at 1088 to 1099 shows a compositional bias: basic and acidic residues; the sequence is KTRELFRNKSES. Residue S1097 is modified to Phosphoserine. A compositionally biased stretch (low complexity) spans 1131–1146; it reads PPSLDAPHPSSPSSDS. The span at 1154–1163 shows a compositional bias: basic and acidic residues; it reads DYNETHHEHS.

As to quaternary structure, component of the TSC-TBC complex (also named Rhebulator complex), composed of 2 molecules of TSC1, 2 molecules of TSC2 and 1 molecule of TBC1D7. Probably forms a complex composed of chaperones HSP90 and HSP70, co-chaperones STIP1/HOP, CDC37, PPP5C, PTGES3/p23, TSC1 and client protein TSC2. Forms a complex composed of chaperones HSP90 and HSP70, co-chaperones CDC37, PPP5C, TSC1 and client protein TSC2, CDK4, AKT, RAF1 and NR3C1; this complex does not contain co-chaperones STIP1/HOP and PTGES3/p23. Forms a complex containing HSP90AA1, TSC1 and TSC2; TSC1 is required to recruit TCS2 to the complex. Interacts (via C-terminus) with the closed form of HSP90AA1 (via the middle domain and TPR repeat-binding motif). Interacts with DOCK7. Interacts with FBXW5. Interacts with WDR45B. Interacts with RPAP3 and URI1. Phosphorylation at Ser-505 does not affect interaction with TSC2. Post-translationally, 'Lys-63'-linked ubiquitinated at Lys-30 by PELI1; the ubiquitination promotes TSC1/TSC2 complex stability. As to expression, highly expressed in brain, spleen and kidney, followed by liver and heart.

The protein localises to the lysosome membrane. It is found in the cytoplasm. Its subcellular location is the cytosol. Functionally, non-catalytic component of the TSC-TBC complex, a multiprotein complex that acts as a negative regulator of the canonical mTORC1 complex, an evolutionarily conserved central nutrient sensor that stimulates anabolic reactions and macromolecule biosynthesis to promote cellular biomass generation and growth. The TSC-TBC complex acts as a GTPase-activating protein (GAP) for the small GTPase RHEB, a direct activator of the protein kinase activity of mTORC1. In absence of nutrients, the TSC-TBC complex inhibits mTORC1, thereby preventing phosphorylation of ribosomal protein S6 kinase (RPS6KB1 and RPS6KB2) and EIF4EBP1 (4E-BP1) by the mTORC1 signaling. The TSC-TBC complex is inactivated in response to nutrients, relieving inhibition of mTORC1. Within the TSC-TBC complex, TSC1 stabilizes TSC2 and prevents TSC2 self-aggregation. Involved in microtubule-mediated protein transport via its ability to regulate mTORC1 signaling. Also acts as a co-chaperone for HSP90AA1 facilitating HSP90AA1 chaperoning of protein clients such as kinases, TSC2 and glucocorticoid receptor NR3C1. Increases ATP binding to HSP90AA1 and inhibits HSP90AA1 ATPase activity. Competes with the activating co-chaperone AHSA1 for binding to HSP90AA1, thereby providing a reciprocal regulatory mechanism for chaperoning of client proteins. Recruits TSC2 to HSP90AA1 and stabilizes TSC2 by preventing the interaction between TSC2 and ubiquitin ligase HERC1. In Rattus norvegicus (Rat), this protein is Hamartin.